A 320-amino-acid chain; its full sequence is Cytochrome f (320 aa).

Residues 1-35 form the signal peptide; that stretch reads MKLNSLINLIQKSIYSCTLLLIILNIICVAPNSSN. 4 residues coordinate heme: Phe-37, Cys-57, Cys-60, and His-61. Residues 286–306 traverse the membrane as a helical segment; the sequence is IKGMIVFFFASVLAQIFFVLK.

It belongs to the cytochrome f family. As to quaternary structure, the 4 large subunits of the cytochrome b6-f complex are cytochrome b6, subunit IV (17 kDa polypeptide, petD), cytochrome f and the Rieske protein, while the 4 small subunits are PetG, PetL, PetM and PetN. The complex functions as a dimer. Heme is required as a cofactor.

It localises to the plastid. It is found in the chloroplast thylakoid membrane. Its function is as follows. Component of the cytochrome b6-f complex, which mediates electron transfer between photosystem II (PSII) and photosystem I (PSI), cyclic electron flow around PSI, and state transitions. In Pyropia yezoensis (Susabi-nori), this protein is Cytochrome f.